Here is a 313-residue protein sequence, read N- to C-terminus: N-acetyl-gamma-glutamyl-phosphate reductase (313 aa).

Residue Cys117 is part of the active site.

Belongs to the NAGSA dehydrogenase family. Type 2 subfamily.

The protein resides in the cytoplasm. It carries out the reaction N-acetyl-L-glutamate 5-semialdehyde + phosphate + NADP(+) = N-acetyl-L-glutamyl 5-phosphate + NADPH + H(+). Its pathway is amino-acid biosynthesis; L-arginine biosynthesis; N(2)-acetyl-L-ornithine from L-glutamate: step 3/4. Catalyzes the NADPH-dependent reduction of N-acetyl-5-glutamyl phosphate to yield N-acetyl-L-glutamate 5-semialdehyde. The polypeptide is N-acetyl-gamma-glutamyl-phosphate reductase (Burkholderia cenocepacia (strain ATCC BAA-245 / DSM 16553 / LMG 16656 / NCTC 13227 / J2315 / CF5610) (Burkholderia cepacia (strain J2315))).